The chain runs to 62 residues: Large ribosomal subunit protein uL30 (62 aa).

The protein belongs to the universal ribosomal protein uL30 family. As to quaternary structure, part of the 50S ribosomal subunit.

The polypeptide is Large ribosomal subunit protein uL30 (Shouchella clausii (strain KSM-K16) (Alkalihalobacillus clausii)).